The primary structure comprises 222 residues: Phosphoglycolate phosphatase (222 aa).

Residue D8 is the Nucleophile of the active site. 2 residues coordinate Mg(2+): D8 and D10. K146 is a binding site for substrate. Mg(2+)-binding residues include D169 and D173.

It belongs to the archaeal SPP-like hydrolase family. Requires Mg(2+) as cofactor.

It carries out the reaction 2-phosphoglycolate + H2O = glycolate + phosphate. Catalyzes the dephosphorylation of 2-phosphoglycolate. The polypeptide is Phosphoglycolate phosphatase (Methanothrix thermoacetophila (strain DSM 6194 / JCM 14653 / NBRC 101360 / PT) (Methanosaeta thermophila)).